A 405-amino-acid chain; its full sequence is K(+)/H(+) antiporter subunit KhtU (405 aa).

Transmembrane regions (helical) follow at residues 3-23 (HLVFEVGTALVLVAIASVIAN), 29-49 (IIPFLIVLGMLVGPHAPKMGI), 60-80 (IIEFFGRMGVLFLLFYLGLEF), 85-105 (LIKSGKSIAVGGTIYILINFS), 108-128 (LLYGFITGFSFLEVLILAGVI), 153-173 (LILGIIMFEDIFLAVYLSVVS), 183-203 (VGSALLSILIAFGYMLLFFIA), 222-242 (VFIIVIFAALFFIAGFSETIH), 268-288 (LVVPFRDFFGAMFFFSFGLSI), 297-317 (VWLALGAVILTILGNFIAGMV), 332-352 (IGLTIVSRGEFSIIVANLGIA), and 357-377 (ATLKPFAALYVLILAILGPLV).

The protein belongs to the monovalent cation:proton antiporter 2 (CPA2) transporter (TC 2.A.37) family. In terms of assembly, the transporter is composed of the integral membrane protein KhtU and the regulatory protein KhtT.

Its subcellular location is the cell membrane. Its activity is regulated as follows. Potassium antiport activity requires the presence of KhtT. Activity is also modulated by KhtS. Has higher activity at alkaline pH. Its function is as follows. Potassium/proton antiporter that mediates the efflux of potassium ions from the cell. Can also mediate rubidium/proton antiport, but has no permeability for sodium or lithium ions. In the absence of KhtT, does not have antiport activity, but can catalyze potassium efflux. Involved in protection of the cell from methylglyoxal, a toxic by-product of glycolysis, via activation by S-lactoyl-BSH of the antiporter activity, leading to cytoplasmic acidification and methylglyoxal resistance. This is K(+)/H(+) antiporter subunit KhtU from Bacillus subtilis (strain 168).